Here is a 92-residue protein sequence, read N- to C-terminus: Small ribosomal subunit protein uS19 (92 aa).

The protein belongs to the universal ribosomal protein uS19 family.

Protein S19 forms a complex with S13 that binds strongly to the 16S ribosomal RNA. This Yersinia pestis (strain Pestoides F) protein is Small ribosomal subunit protein uS19.